The primary structure comprises 384 residues: MINNVSSLFPTVNRNITAVYKKSSFSVSPQKITLNPVKISSPFSPSSSSISATTLFRAPNAHSASFHRQSTAESSLHQQLPNVRQRLIQHLAEHGIXPARSMAEHIPPAPKWPAPPPPVQNEQSRPLPDVAQRLMQHLAEHGIQPARNMAEHIPPAPNWPAPTPPVQNEQSRPLPDVAQRLMQHLAEHGIQPARNMAEHIPPAPXWXAPTPPVQNEQSRPLPDVAQRLMQHLAEHGIZPARSMAEHIPPAPNWPAPPPPVQNEQSRPLPDVAQRLXQHLAEHGIQPARNMAEHIPPAPNWPAPXXPVXNEQSRPLXDVAXRLMQHLAEHGIQPARNMAEHIPPAPNWXAPTPPVQNEQSRPLPDVAQRLMQHLAEHGINTSKRS.

A run of 6 repeats spans residues 96–142, 143–189, 190–236, 237–283, 284–330, and 331–377. The segment at 96 to 377 is 6 X 48 AA approximate tandem repeats; that stretch reads IXPARSMAEH…RLMQHLAEHG (282 aa). The disordered stretch occupies residues 247–266; that stretch reads IPPAPNWPAPPPPVQNEQSR. Positions 248–260 are enriched in pro residues; that stretch reads PPAPNWPAPPPPV.

Belongs to the EspF(U)/TccP family. In terms of assembly, interacts with host BAIAP2 and host WASL/N-WASP. Can also interact with host proteins BAIAP2L1 and WAS/WASP.

It localises to the secreted. Its subcellular location is the host cytoplasm. Functionally, required for efficient pedestal formation in host epithelial cells during infection. Acts as an intermediate between Tir (via host BAIAP2) and host WASL/N-WASP. Directly binds and activates WASL/N-WASP, which stimulates actin polymerization and leads to the formation of actin pedestals at the sites of bacterial adhesion. This chain is Secreted effector protein EspF(U) (espF(U)), found in Escherichia coli O157:H7.